The chain runs to 594 residues: Lipolysis-stimulated lipoprotein receptor (594 aa).

The first 35 residues, 1–35 (MAPAASACAGAPGSHPATTIFVCLFLIIYCPDRAS), serve as a signal peptide directing secretion. Residues 36 to 206 (AIQVTVPDPY…PGFRAGPLED (171 aa)) are Extracellular-facing. In terms of domain architecture, Ig-like V-type spans 89-181 (PASVDNQLNA…DLDGNNEAYA (93 aa)). Cysteine 113 and cysteine 165 are joined by a disulfide. The chain crosses the membrane as a helical span at residues 207–227 (WLFVVVVCLASLLFFLLLGIC). Residues 228–594 (WCQCCPHTCC…LALSRESLVV (367 aa)) are Cytoplasmic-facing. Threonine 283 is subject to Phosphothreonine. At serine 308 the chain carries Phosphoserine; by MAPK8 and MAPK9. Residues serine 314, serine 332, serine 375, and serine 379 each carry the phosphoserine modification. Basic and acidic residues predominate over residues 375–387 (SEVTSLHEDDWRS). Positions 375–594 (SEVTSLHEDD…LALSRESLVV (220 aa)) are disordered. At threonine 396 the chain carries Phosphothreonine. Phosphoserine occurs at positions 407, 410, and 436. The span at 435–444 (RSVDALDDIN) shows a compositional bias: basic and acidic residues. A compositionally biased stretch (low complexity) spans 445 to 460 (RPGSTESGRSSPPSSG). Serine 471 and serine 473 each carry phosphoserine. Residues 472-550 (RSRDDLYDPD…GAGERRRVYR (79 aa)) are compositionally biased toward basic and acidic residues. At tyrosine 478 the chain carries Phosphotyrosine. A Phosphoserine modification is found at serine 576. Lysine 583 participates in a covalent cross-link: Glycyl lysine isopeptide (Lys-Gly) (interchain with G-Cter in ubiquitin). Serine 588 and serine 591 each carry phosphoserine.

It belongs to the immunoglobulin superfamily. LISCH7 family. As to quaternary structure, homotrimer or homotetramer. Assembles into cell-cell contacts. Interacts (via the cytoplasmic domain) with MARVELD2 (via C-terminal cytoplasmic domain); the interaction is required to recruit MARVELD2 to tricellular contacts. Interacts with OCLN. Phosphorylation at Ser-308 by MAPK8/JNK1 and MAPK9/JNK2 may be required for exclusive localization at tricellular tight junstions. In terms of processing, polyubiquitinated at Lys-583 via 'Lys-63'-linked ubiquitin chains; deubiquitinated by USP53. In terms of tissue distribution, expressed in epithelial tissues (at protein level). Specifically expressed in liver and to a lower extent in kidney (at protein level). Also detected in brain, testis, ovaries, adrenal gland, intestine, muscle, and lung. In colon, only expressed in the lower portion of crypts. Expressed in the liver. As to expression, expressed in liver, stomach, small intestine and colon. Also detected in other epithelial tissues.

The protein localises to the cell membrane. It is found in the cell junction. The protein resides in the tight junction. Functionally, probable role in the clearance of triglyceride-rich lipoprotein from blood. Binds chylomicrons, LDL and VLDL in presence of free fatty acids and allows their subsequent uptake in the cells. Maintains epithelial barrier function by recruiting MARVELD2/tricellulin to tricellular tight junctions. This Mus musculus (Mouse) protein is Lipolysis-stimulated lipoprotein receptor.